A 217-amino-acid chain; its full sequence is Proteasome subunit beta type-9 (217 aa).

A propeptide spans 1-18 (MLGEEAEPQWISEEVKTG) (removed in mature form). The active-site Nucleophile is Thr19.

Belongs to the peptidase T1B family. The 26S proteasome consists of a 20S proteasome core and two 19S regulatory subunits. The 20S proteasome core is composed of 28 subunits that are arranged in four stacked rings, resulting in a barrel-shaped structure. The two end rings are each formed by seven alpha subunits, and the two central rings are each formed by seven beta subunits. The catalytic chamber with the active sites is on the inside of the barrel. Component of the immunoproteasome, where it displaces the equivalent housekeeping subunit PSMB6. Post-translationally, autocleaved. The resulting N-terminal Thr residue of the mature subunit is responsible for the nucleophile proteolytic activity.

It localises to the cytoplasm. The protein localises to the nucleus. It carries out the reaction Cleavage of peptide bonds with very broad specificity.. The proteasome is a multicatalytic proteinase complex which is characterized by its ability to cleave peptides with Arg, Phe, Tyr, Leu, and Glu adjacent to the leaving group at neutral or slightly basic pH. The proteasome has an ATP-dependent proteolytic activity. This subunit is involved in antigen processing to generate class I binding peptides. The polypeptide is Proteasome subunit beta type-9 (psmb9) (Oryzias latipes (Japanese rice fish)).